The sequence spans 192 residues: LexA repressor (192 aa).

The H-T-H motif DNA-binding region spans 15–35 (RAEIARELGFRSANAAEEHLK). Residues S109 and K146 each act as for autocatalytic cleavage activity in the active site.

Belongs to the peptidase S24 family. As to quaternary structure, homodimer.

The catalysed reaction is Hydrolysis of Ala-|-Gly bond in repressor LexA.. Its function is as follows. Represses a number of genes involved in the response to DNA damage (SOS response), including recA and lexA. In the presence of single-stranded DNA, RecA interacts with LexA causing an autocatalytic cleavage which disrupts the DNA-binding part of LexA, leading to derepression of the SOS regulon and eventually DNA repair. This is LexA repressor from Photobacterium profundum (strain SS9).